The following is a 177-amino-acid chain: Large ribosomal subunit protein uL6 (177 aa).

This sequence belongs to the universal ribosomal protein uL6 family. Part of the 50S ribosomal subunit.

This protein binds to the 23S rRNA, and is important in its secondary structure. It is located near the subunit interface in the base of the L7/L12 stalk, and near the tRNA binding site of the peptidyltransferase center. The chain is Large ribosomal subunit protein uL6 from Hahella chejuensis (strain KCTC 2396).